Reading from the N-terminus, the 192-residue chain is MIDNLIKKEFLAHKEALEKSLEGLQEALKQSVHLLIETLENQGKILICGNGGSASDAQHFAAELTGRYKLERKGLSAISLNTDISALTAIANDYGYEEVFARQVEALGVKNDVLIGISTSGNSKNVLKAYEKAKDLEMKTLSLAGRDGGKMKPLSDMALIVPSDDTPRIQEMHILMIHILCDCIERHFAHKN.

Residues 35–192 (LIETLENQGK…CIERHFAHKN (158 aa)) enclose the SIS domain. A substrate-binding site is contributed by 50–52 (NGG). The Zn(2+) site is built by H59 and E63. Substrate-binding positions include E63, 92–93 (ND), 118–120 (STS), S123, and Q170. Residues Q170 and H178 each contribute to the Zn(2+) site.

This sequence belongs to the SIS family. GmhA subfamily. In terms of assembly, homotetramer. The cofactor is Zn(2+).

It is found in the cytoplasm. It carries out the reaction 2 D-sedoheptulose 7-phosphate = D-glycero-alpha-D-manno-heptose 7-phosphate + D-glycero-beta-D-manno-heptose 7-phosphate. The protein operates within carbohydrate biosynthesis; D-glycero-D-manno-heptose 7-phosphate biosynthesis; D-glycero-alpha-D-manno-heptose 7-phosphate and D-glycero-beta-D-manno-heptose 7-phosphate from sedoheptulose 7-phosphate: step 1/1. It participates in bacterial outer membrane biogenesis; LPS core biosynthesis. Catalyzes the isomerization of sedoheptulose 7-phosphate in D-glycero-D-manno-heptose 7-phosphate. The sequence is that of Phosphoheptose isomerase from Helicobacter pylori (strain ATCC 700392 / 26695) (Campylobacter pylori).